Here is a 445-residue protein sequence, read N- to C-terminus: MNSGFPRILSKKLFTLNQSQFFVKNGMVPLKAGISGPKLLKYTVGIAIGSFAGFYFSNSRSAFHEYVLCPMLRLVTPDAEDGHKLGIWFLKNGLAPRLWFDNDDKVLNVNIFGKKLTNPIGCAAGLDKNGDAIDGILSGGFGYIEIGSVTPLPQPGNPRPRFFRLPLDDAVINRYGFNSSGHDTVVNTLQSRITSFINSYMFKDNSVENLSLYKDKLLGVNLGKNKTGDEVQDYLKGVESFQKYADVLVINVSSPNTPGLRSLQKESILTDLLTQVVAKRDSLVTSGNALGAKTHKPPVLVKVAPDLVEEEIKSIAEAAKKSKVDGIIISNTTIQRPTTLITEDSDLVSQAGGLSGKPLKPLALKALKTMAKYTKGSGLVLVGCGGISSGADAIEFAKAGASMVELYTAYAYKGPGLIAKIKDETTELLKKENKTWSEIIGEDIK.

A mitochondrion-targeting transit peptide spans 1–16; it reads MNSGFPRILSKKLFTL. The helical transmembrane segment at 39 to 56 threads the bilayer; it reads LLKYTVGIAIGSFAGFYF. Residues 124-128 and Ser-148 contribute to the FMN site; that span reads AGLDK. Residue Lys-128 participates in substrate binding. Residue 173–177 participates in substrate binding; the sequence is NRYGF. 2 residues coordinate FMN: Asn-221 and Asn-251. 251–256 contacts substrate; that stretch reads NVSSPN. The active-site Nucleophile is the Ser-254. 2 residues coordinate FMN: Lys-302 and Ser-330. Residue 331-332 coordinates substrate; it reads NT. Residues Gly-356, Gly-386, and 407–408 each bind FMN; that span reads YT.

The protein belongs to the dihydroorotate dehydrogenase family. Type 2 subfamily. Requires FMN as cofactor.

Its subcellular location is the mitochondrion inner membrane. It carries out the reaction (S)-dihydroorotate + a quinone = orotate + a quinol. It participates in pyrimidine metabolism; UMP biosynthesis via de novo pathway; orotate from (S)-dihydroorotate (quinone route): step 1/1. Its function is as follows. Catalyzes the conversion of dihydroorotate to orotate with quinone as electron acceptor. The protein is Dihydroorotate dehydrogenase (quinone), mitochondrial (URA9) of Kluyveromyces lactis (strain ATCC 8585 / CBS 2359 / DSM 70799 / NBRC 1267 / NRRL Y-1140 / WM37) (Yeast).